The following is a 467-amino-acid chain: ATP synthase subunit beta (467 aa).

156–163 (GGAGVGKT) lines the ATP pocket.

The protein belongs to the ATPase alpha/beta chains family. As to quaternary structure, F-type ATPases have 2 components, CF(1) - the catalytic core - and CF(0) - the membrane proton channel. CF(1) has five subunits: alpha(3), beta(3), gamma(1), delta(1), epsilon(1). CF(0) has three main subunits: a(1), b(2) and c(9-12). The alpha and beta chains form an alternating ring which encloses part of the gamma chain. CF(1) is attached to CF(0) by a central stalk formed by the gamma and epsilon chains, while a peripheral stalk is formed by the delta and b chains.

It localises to the cell inner membrane. It carries out the reaction ATP + H2O + 4 H(+)(in) = ADP + phosphate + 5 H(+)(out). In terms of biological role, produces ATP from ADP in the presence of a proton gradient across the membrane. The catalytic sites are hosted primarily by the beta subunits. In Ralstonia nicotianae (strain ATCC BAA-1114 / GMI1000) (Ralstonia solanacearum), this protein is ATP synthase subunit beta.